Here is a 343-residue protein sequence, read N- to C-terminus: MVDKRQLLGMTLEELKGVASEVGLPAYAAKQMADWIYKKKITRISEMTNIAVAKRALLEDSFEIGAYPPSEYQKSKDGTIKYLYAAGPGRFVESVYIPTDDRATLCVSSQVGCKMNCLFCMTGKQGFTANLTANQILNQIQSLPENDSLTNIVFMGMGEPLDNVDELFKVLEILTAPYGYAWSPKRITVSTIGVTKGLKRFLEESECHLAVSLHSPYPMERLSLMPVEKAFPAREVIDLIKQYDFSHQRRVSFEYIVFKNLNDSLKHAEALSCLLGGIPCRVNLIRFHAIPNVSLETSDIAKMEAFRDFLNAKGVVCTIRASRGEDIFAACGMLSTAKNVTFV.

Glu-93 (proton acceptor) is an active-site residue. Positions 99 to 320 (TDDRATLCVS…NAKGVVCTIR (222 aa)) constitute a Radical SAM core domain. Cysteines 106 and 331 form a disulfide. 3 residues coordinate [4Fe-4S] cluster: Cys-113, Cys-117, and Cys-120. S-adenosyl-L-methionine is bound by residues 158–159 (GE), Ser-190, 212–214 (SLH), and His-288. Cys-331 (S-methylcysteine intermediate) is an active-site residue.

The protein belongs to the radical SAM superfamily. RlmN family. [4Fe-4S] cluster serves as cofactor.

The protein localises to the cytoplasm. It catalyses the reaction adenosine(2503) in 23S rRNA + 2 reduced [2Fe-2S]-[ferredoxin] + 2 S-adenosyl-L-methionine = 2-methyladenosine(2503) in 23S rRNA + 5'-deoxyadenosine + L-methionine + 2 oxidized [2Fe-2S]-[ferredoxin] + S-adenosyl-L-homocysteine. The catalysed reaction is adenosine(37) in tRNA + 2 reduced [2Fe-2S]-[ferredoxin] + 2 S-adenosyl-L-methionine = 2-methyladenosine(37) in tRNA + 5'-deoxyadenosine + L-methionine + 2 oxidized [2Fe-2S]-[ferredoxin] + S-adenosyl-L-homocysteine. In terms of biological role, specifically methylates position 2 of adenine 2503 in 23S rRNA and position 2 of adenine 37 in tRNAs. In Parabacteroides distasonis (strain ATCC 8503 / DSM 20701 / CIP 104284 / JCM 5825 / NCTC 11152), this protein is Probable dual-specificity RNA methyltransferase RlmN.